A 335-amino-acid polypeptide reads, in one-letter code: Cytoplasmic envelopment protein 2 (335 aa).

This sequence belongs to the herpesviridae cytoplasmic envelopment protein 2 family. Interacts with cytoplasmic envelopment protein 3 and with the capsid.

Its subcellular location is the virion tegument. It localises to the host cytoplasm. The protein localises to the host nucleus. Plays a critical role in cytoplasmic virus egress. Participates in the final step of tegumentation and envelope acquisition within the host cytoplasm by directly interacting with the capsid. Upon virion binding to target cell, a signaling cascade is triggered to disrupt the interaction with the capsid, thereby preparing capsid uncoating. This is Cytoplasmic envelopment protein 2 (33) from Connochaetes taurinus (Blue wildebeest).